A 286-amino-acid polypeptide reads, in one-letter code: ATP synthase gamma chain (286 aa).

This sequence belongs to the ATPase gamma chain family. F-type ATPases have 2 components, CF(1) - the catalytic core - and CF(0) - the membrane proton channel. CF(1) has five subunits: alpha(3), beta(3), gamma(1), delta(1), epsilon(1). CF(0) has three main subunits: a, b and c.

It is found in the cell inner membrane. Its function is as follows. Produces ATP from ADP in the presence of a proton gradient across the membrane. The gamma chain is believed to be important in regulating ATPase activity and the flow of protons through the CF(0) complex. The polypeptide is ATP synthase gamma chain (Shewanella oneidensis (strain ATCC 700550 / JCM 31522 / CIP 106686 / LMG 19005 / NCIMB 14063 / MR-1)).